Here is a 430-residue protein sequence, read N- to C-terminus: Adenylosuccinate synthetase (430 aa).

GTP-binding positions include 13-19 and 41-43; these read GDEGKGK and GHT. The Proton acceptor role is filled by Asp-14. 2 residues coordinate Mg(2+): Asp-14 and Gly-41. IMP-binding positions include 14 to 17, 39 to 42, Thr-130, Arg-144, Gln-225, Thr-240, and Arg-304; these read DEGK and NAGH. The active-site Proton donor is His-42. Substrate is bound at residue 300 to 306; the sequence is ATTGRAR. Residues Arg-306, 332-334, and 414-416 contribute to the GTP site; these read KLD and STG.

The protein belongs to the adenylosuccinate synthetase family. As to quaternary structure, homodimer. The cofactor is Mg(2+).

The protein localises to the cytoplasm. It catalyses the reaction IMP + L-aspartate + GTP = N(6)-(1,2-dicarboxyethyl)-AMP + GDP + phosphate + 2 H(+). Its pathway is purine metabolism; AMP biosynthesis via de novo pathway; AMP from IMP: step 1/2. Functionally, plays an important role in the de novo pathway of purine nucleotide biosynthesis. Catalyzes the first committed step in the biosynthesis of AMP from IMP. The chain is Adenylosuccinate synthetase from Pseudomonas syringae pv. tomato (strain ATCC BAA-871 / DC3000).